Reading from the N-terminus, the 492-residue chain is Aerolysin (492 aa).

The first 21 residues, 1-21 (MKALKITGLSLIISATLAAQT), serve as a signal peptide directing secretion. 2 disulfides stabilise this stretch: Cys-42–Cys-98 and Cys-182–Cys-187. An interaction with host N-linked glycan region spans residues 68-84 (WQISGLANNWVILGPGY). Positions 256–288 (YGLSEKVSTKNKFKWPLVGETEVSIEIAANQSW) are part of the transmembrane beta-barrel after proteolytic activation of the toxin and insertion into the host membrane. The segment at 346–355 (RWGGNAWHTH) is interaction with glycans from host GPI-anchor. A propeptide spanning residues 446–492 (GSDSKVRRTRSVDGANTGLKLDIPLDAQELAELGFENVTLSVTPARN) is cleaved from the precursor.

It belongs to the aerolysin family. As to quaternary structure, homodimer in solution; homoheptamer in the host membrane. After binding to GPI-anchored proteins in target membranes and proteolytic removal of the C-terminal propeptide, the protein assembles into a heptameric pre-pore complex. A further conformation change leads to insertion into the host membrane. Post-translationally, proteolytic cleavage and subsequent release of the propeptide trigger a major conformation change, leading to the formation of a heptameric pre-pore that then inserts into the host membrane.

It is found in the secreted. The protein resides in the host cell membrane. In terms of biological role, secreted, cytolytic toxin that forms pores in host membranes after proteolytic removal of a C-terminal propeptide, leading to destruction of the membrane permeability barrier and cell death. The pores are formed by transmembrane beta-strands and are approximately 3 nm in diameter. The sequence is that of Aerolysin (aerA) from Aeromonas enteropelogenes (Aeromonas trota).